We begin with the raw amino-acid sequence, 489 residues long: Ammonium transporter MEP3 (489 aa).

The Extracellular portion of the chain corresponds to 1 to 17 (MARGDGHLWTETYDSST). The chain crosses the membrane as a helical span at residues 18–38 (VAFMILGAALVFFMVPGLGFL). At 39–48 (YSGLARRKSA) the chain is on the cytoplasmic side. The helical transmembrane segment at 49-69 (LALIWVVIMATLVGILQWYFW) threads the bilayer. At 70–108 (GYSLAFSKTATNNKFIGNLDSFGFRNVYGKISDDSTYPE) the chain is on the extracellular side. A helical transmembrane segment spans residues 109–129 (LIYAIFQMMFMCVALSIIAGA). Residues 130 to 139 (TAERGKLFPH) lie on the Cytoplasmic side of the membrane. The helical transmembrane segment at 140-160 (MVFLFVFATLVYCPITYWIWA) threads the bilayer. At 161–173 (PGGWAYQWGVLDW) the chain is on the extracellular side. A helical membrane pass occupies residues 174 to 194 (AGGGNIEILSAVAGFVYSYFL). Over 195-209 (GRRKENLLINFRPHN) the chain is Cytoplasmic. Residues 210–230 (VSMVTLGTSILWFGWLLFNAA) form a helical membrane-spanning segment. Over 231–239 (SSLSPNMRS) the chain is Extracellular. A helical membrane pass occupies residues 240–260 (VYAFMNTCLSATTGGMTWCLL). Residues 261–267 (DYRSEKK) are Cytoplasmic-facing. Residues 268–288 (WSTVGLCSGIICGLVAATPSS) traverse the membrane as a helical segment. Gly-289 is a topological domain (extracellular). A helical transmembrane segment spans residues 290 to 310 (CITLYGSLIQGIIAGVVCNFA). Residues 311-330 (TKIKYYLKVDDSLDLLAEHG) are Cytoplasmic-facing. Residues 331–351 (IAGVVGLIFNALFAADWVIGM) form a helical membrane-spanning segment. Residues 352–372 (DGTTKHKGGWLTHNWKQMYIQ) are Extracellular-facing. The helical transmembrane segment at 373–393 (IAYIGASAGYCAVVTAIICFV) threads the bilayer. Residues 394 to 489 (LGKIPGVHLR…NPKLHHAKEA (96 aa)) are Cytoplasmic-facing. A compositionally biased stretch (polar residues) spans 448–481 (GANSASETNPTEDSQNSSLSSATVSGQNEKSNNP). The segment at 448 to 489 (GANSASETNPTEDSQNSSLSSATVSGQNEKSNNPKLHHAKEA) is disordered.

This sequence belongs to the ammonia transporter channel (TC 1.A.11.2) family.

It is found in the membrane. Transporter for ammonium (both charged and uncharged NH3 and NH4) to use as a nitrogen source. The affinity of MEP2 is about twenty times higher than that of MEP1. MEP3 has the lowest affinity. In Saccharomyces cerevisiae (strain ATCC 204508 / S288c) (Baker's yeast), this protein is Ammonium transporter MEP3 (MEP3).